A 162-amino-acid chain; its full sequence is Putative ethylene-responsive transcription factor ERF121 (162 aa).

Disordered regions lie at residues 1 to 21, 84 to 103, and 139 to 162; these read MDYSENVQNKNFTPISQPPNL, IKQEKKHKGVRKKPSGKWSA, and KRSARRGSKKGEGSIHQEVGGGDD. Basic residues predominate over residues 87–98; that stretch reads EKKHKGVRKKPS. Positions 89 to 146 form a DNA-binding region, AP2/ERF; sequence KHKGVRKKPSGKWSAEIWDPSTRTRRWLGTFPTAEMAADAYDEAAAALVEKRSARRGS.

This sequence belongs to the AP2/ERF transcription factor family. ERF subfamily.

It localises to the nucleus. Functionally, probably acts as a transcriptional activator. Binds to the GCC-box pathogenesis-related promoter element. May be involved in the regulation of gene expression by stress factors and by components of stress signal transduction pathways. The polypeptide is Putative ethylene-responsive transcription factor ERF121 (ERF121) (Arabidopsis thaliana (Mouse-ear cress)).